A 402-amino-acid chain; its full sequence is MTKLVPPHGSDTLKSLALEGNALTVELERAKLLPKINCSSREEGDIIMMGVGGFTPLEGFMGKADWQSVCDNMTIESGLFWPIPITLSTDNEGVNQGDEVALVNGETDEIIATMVISEKYSIDKTHECNTVYKTTEIEHPGVVMVMAQGKYNLAGSIKVLSDGGFPEKYSSLYMTPMETRAYFDDKGWKTVAAFQTRNPMHRSHEYLVKIAVEVCDGVMIHSVLGNLKAGDIPANVRSEAISVLIENYFVDNTILQSGYPLDMRYAGPREALLHALFRQNYGCSHLIVGRDHAGIDDYYGPFDAHNIFDEIADDALMTKALKIDWTFWCHKCGGMSSMKTCPHSAEDRALLSGTKVRKMLSDSEDLPETFSRPEVAKVLQAYYAGIKDEDKVEIKLNGHSAK.

This sequence belongs to the sulfate adenylyltransferase family.

The catalysed reaction is sulfate + ATP + H(+) = adenosine 5'-phosphosulfate + diphosphate. Its pathway is sulfur metabolism; hydrogen sulfide biosynthesis; sulfite from sulfate: step 1/3. The sequence is that of Sulfate adenylyltransferase from Ruthia magnifica subsp. Calyptogena magnifica.